A 199-amino-acid chain; its full sequence is ATP-dependent Clp protease proteolytic subunit (199 aa).

Residue S97 is the Nucleophile of the active site. H122 is an active-site residue.

Belongs to the peptidase S14 family. As to quaternary structure, fourteen ClpP subunits assemble into 2 heptameric rings which stack back to back to give a disk-like structure with a central cavity, resembling the structure of eukaryotic proteasomes.

It localises to the cytoplasm. It catalyses the reaction Hydrolysis of proteins to small peptides in the presence of ATP and magnesium. alpha-casein is the usual test substrate. In the absence of ATP, only oligopeptides shorter than five residues are hydrolyzed (such as succinyl-Leu-Tyr-|-NHMec, and Leu-Tyr-Leu-|-Tyr-Trp, in which cleavage of the -Tyr-|-Leu- and -Tyr-|-Trp bonds also occurs).. Functionally, cleaves peptides in various proteins in a process that requires ATP hydrolysis. Has a chymotrypsin-like activity. Plays a major role in the degradation of misfolded proteins. The polypeptide is ATP-dependent Clp protease proteolytic subunit (Geobacter metallireducens (strain ATCC 53774 / DSM 7210 / GS-15)).